We begin with the raw amino-acid sequence, 778 residues long: MNKKILETLEFDKVKALFEPHLLTEQGLEQLRQLAPTAKADKIKQAFAEMKEMQALFVEQPHFTILSTKEIAGVCKRLEMGADLNIEEFLLLKRVLLTSRELQSFYANLENVSLEELALWFEKLHDFPQLQGNLQAFNDAGFIENFASEELARIRRKIHDSESQVRDVLQDLLKQKAQMLTEGIVASRNGRQVLPVKNTYRNKIAGVVHDISASGNTVYIEPREVVKLSEEIASLRADERYEMLRILQEISERVRPHAAEIANDAWIIGHLDLIRAKVRFIQERQAVVPQLSENQEIQLLHVCHPLVKNAVANDVYFGQDLTAIVITGPNTGGKTIMLKTLGLTQVMAQSGLPILADKGSRVGIFEEIFADIGDEQSIEQSLSTFSSHMTNIVDILGKVNQHSLLLLDELGAGTDPQEGAALAMAILEDLRLRQIKTMATTHYPELKAYGIETAFVQNASMEFDTATLRPTYRFMQGVPGRSNAFEIAKRLGLSEVIVGDASQQIDQDNDVNRIIEQLEEQTLESRKRLDNIREVEQENLKMNRALKKLYNELNREKETELNKAREQAAEIVDMALSESDQILKNLHSKSQLKPHEIIEAKAKLKKLAPEKVDLSKNKVLQKAKKKRAPKVGDDIVVLSYGQRGTLTSQLKDGRWEAQVGLIKMTLEEKEFDLVQAQQEKAVKKKQVNVVKRTSGRGPQARLDLRGKRYEEAMNELDTFIDQALLNNMAQVDIIHGIGTGVIREGVTKYLQRNKHVKSFGYAPQNAGGSGATIVTFKG.

328 to 335 (GPNTGGKT) contributes to the ATP binding site. Residues 702–777 (LDLRGKRYEE…GSGATIVTFK (76 aa)) enclose the Smr domain.

The protein belongs to the DNA mismatch repair MutS family. MutS2 subfamily. As to quaternary structure, homodimer. Binds to stalled ribosomes, contacting rRNA.

Its function is as follows. Endonuclease that is involved in the suppression of homologous recombination and thus may have a key role in the control of bacterial genetic diversity. Acts as a ribosome collision sensor, splitting the ribosome into its 2 subunits. Detects stalled/collided 70S ribosomes which it binds and splits by an ATP-hydrolysis driven conformational change. Acts upstream of the ribosome quality control system (RQC), a ribosome-associated complex that mediates the extraction of incompletely synthesized nascent chains from stalled ribosomes and their subsequent degradation. Probably generates substrates for RQC. The chain is Endonuclease MutS2 from Streptococcus pneumoniae (strain JJA).